Reading from the N-terminus, the 210-residue chain is dITP/XTP pyrophosphatase (210 aa).

13–18 (THNPGK) contributes to the substrate binding site. Positions 45 and 74 each coordinate Mg(2+). The active-site Proton acceptor is the D74. Residues S75, 160-163 (FGYD), K183, and 195-196 (HR) each bind substrate.

The protein belongs to the HAM1 NTPase family. In terms of assembly, homodimer. Requires Mg(2+) as cofactor.

The catalysed reaction is XTP + H2O = XMP + diphosphate + H(+). The enzyme catalyses dITP + H2O = dIMP + diphosphate + H(+). It carries out the reaction ITP + H2O = IMP + diphosphate + H(+). Its function is as follows. Pyrophosphatase that catalyzes the hydrolysis of nucleoside triphosphates to their monophosphate derivatives, with a high preference for the non-canonical purine nucleotides XTP (xanthosine triphosphate), dITP (deoxyinosine triphosphate) and ITP. Seems to function as a house-cleaning enzyme that removes non-canonical purine nucleotides from the nucleotide pool, thus preventing their incorporation into DNA/RNA and avoiding chromosomal lesions. This Rhodopseudomonas palustris (strain ATCC BAA-98 / CGA009) protein is dITP/XTP pyrophosphatase.